The sequence spans 373 residues: NADPH-dependent 3-keto-steroid reductase Hsd3b5 (373 aa).

NADP(+) contacts are provided by residues 10–15, Tyr155, and Lys159; that span reads GAGGFL. Lys159 (proton donor) is an active-site residue. Residues 288–308 form a helical membrane-spanning segment; that stretch reads LPLLYWLAFLLETVSFLLRPF. Lys350 is subject to N6-acetyllysine.

Belongs to the 3-beta-HSD family. Expressed predominantly in male liver.

It localises to the endoplasmic reticulum membrane. The protein localises to the mitochondrion membrane. It carries out the reaction a 3beta-hydroxysteroid + NADP(+) = a 3-oxosteroid + NADPH + H(+). The enzyme catalyses 5alpha-androstane-3beta,17beta-diol + NADP(+) = 17beta-hydroxy-5alpha-androstan-3-one + NADPH + H(+). It catalyses the reaction 3beta-hydroxy-5alpha-androstan-17-one + NADP(+) = 5alpha-androstan-3,17-dione + NADPH + H(+). Its pathway is steroid metabolism. Functionally, responsible for the reduction of the oxo group on the C-3 of 5alpha-androstane steroids. Catalyzes the conversion of dihydrotestosterone to its inactive form 5alpha-androstanediol, that does not bind androgen receptor/AR. Also converts androstanedione, a precursor of testosterone and estrone, to epiandrosterone. Does not function as an isomerase. This chain is NADPH-dependent 3-keto-steroid reductase Hsd3b5, found in Rattus norvegicus (Rat).